The chain runs to 947 residues: MGFWENNKDSITSGLKSAGKYGYQGTKYVAKTGYKASKKHYNNSKARRERKSGKKNSSDEEYDSEDEMEYERKPTDIRSLKDPKSFPPPPLKPGQKTYTGQQQQQMPNGQASYAFQGAYQGQPGAGSTEQSQYAQPQYNQYPQQQLQQGVMPQQQQLQQGVVPQQPPIYGEQVPPYGSNSNATSYQSLPQQNQPQNAIPSQVSLNSASQQSTGFVSQNLQYGTQSSNPAPSPSFQNGLQCHQQPQYVSHGSTNLGQSQFPSGQQQQPTTQFGQQVLPSPAQPQQQQQGQPLPPPRGQVILPAPGEPLSNGFGQQQQQQQQQQQPLNQNNALLPQMNVEGVSGMAAVQPVYGQAMSSTTNMQDSNPSYGASPMQGQPPVGGQPPVPVRMQPQPPQPMQQGNIYPIEPSLDSTGSTPHFEVTPFDPDAPAPKPKIDIPTVDVSSLPPPPTHRDRGAVVHQEPAPSGKIQPNTTSSAASLPAKHSRTTTADNERNSGNKENDESTSKSSILGHYDVDVNIMPPPKPFRHGLDSVPSEHTTKNAPERAVPILPPRNNVEPPPPPSRGNFERTESVLSTNAANVQEDPISNFLPPPKPFRHTETKQNQNSKASPVEMKGEVLPGHPSEEDRNVEPSLVPQSKPQSQSQFRRAHMETQPIQNFQPPPKPFRRSQSSNSSDSSYTIDGPEANHGRGRGRIAKHHDGDEYNPKSENSTENGRLGDAPNSFIRKRAPTPPAPSRSEKLHEGTITSEVDSSKDANKYEKSIPPVTSSIQAQQSTKKAPPPVVKPKPRNFSLKANEYPKELTREATGQDEVLNSITNELSHIKLRKTNVNLEKLGGSKKVKDSSPVPSDLDEKYVSASGSITPPRPPPSRSSPKKVPPVVPKKNDNLKKKPPVVPKKKPLLKSLEPRPIEMERAYSGDISAADDNLNPFERYKRNVVPQEDDRLHKLK.

3 disordered regions span residues 1–334, 354–810, and 824–904; these read MGFW…LLPQ, MSST…QDEV, and RKTN…KSLE. Residues 36-54 show a composition bias toward basic residues; sequence ASKKHYNNSKARRERKSGK. Phosphoserine is present on residues Ser-57, Ser-58, and Ser-64. Over residues 59–69 the composition is skewed to acidic residues; it reads DEEYDSEDEME. The segment covering 70–84 has biased composition (basic and acidic residues); it reads YERKPTDIRSLKDPK. Low complexity-rich tracts occupy residues 93-105 and 130-163; these read PGQK…QQQQ and QSQY…GVVP. The span at 177–255 shows a compositional bias: polar residues; sequence GSNSNATSYQ…YVSHGSTNLG (79 aa). 2 stretches are compositionally biased toward low complexity: residues 256 to 289 and 313 to 334; these read QSQF…QQGQ and QQQQ…LLPQ. Residues 354–367 are compositionally biased toward polar residues; it reads MSSTTNMQDSNPSY. A compositionally biased stretch (pro residues) spans 379–395; it reads GGQPPVPVRMQPQPPQP. The span at 466–475 shows a compositional bias: polar residues; it reads IQPNTTSSAA. The residue at position 476 (Ser-476) is a Phosphoserine. Residues 488-502 are compositionally biased toward basic and acidic residues; the sequence is DNERNSGNKENDEST. The segment covering 633 to 644 has biased composition (polar residues); sequence VPQSKPQSQSQF. Positions 667 to 676 are enriched in low complexity; sequence SQSSNSSDSS. Position 729 is a phosphothreonine (Thr-729). Residues 749-759 are compositionally biased toward basic and acidic residues; that stretch reads DSSKDANKYEK. Residues 763 to 774 are compositionally biased toward polar residues; it reads PVTSSIQAQQST. Thr-861 is subject to Phosphothreonine. A compositionally biased stretch (pro residues) spans 862–879; that stretch reads PPRPPPSRSSPKKVPPVV. Over residues 888–899 the composition is skewed to basic residues; sequence KKPPVVPKKKPL.

This sequence belongs to the AIM3 family. In terms of assembly, interacts with RVS167.

The protein localises to the membrane raft. This chain is Altered inheritance of mitochondria protein 3 (AIM3), found in Saccharomyces cerevisiae (strain ATCC 204508 / S288c) (Baker's yeast).